We begin with the raw amino-acid sequence, 176 residues long: RNA pyrophosphohydrolase (176 aa).

The region spanning 6-149 (GYRPNVGIVI…KRDVYRRVMK (144 aa)) is the Nudix hydrolase domain. The Nudix box signature appears at 38-59 (GGINPGESPEQAMYRELFEEVG).

The protein belongs to the Nudix hydrolase family. RppH subfamily. It depends on a divalent metal cation as a cofactor.

In terms of biological role, accelerates the degradation of transcripts by removing pyrophosphate from the 5'-end of triphosphorylated RNA, leading to a more labile monophosphorylated state that can stimulate subsequent ribonuclease cleavage. This is RNA pyrophosphohydrolase from Proteus mirabilis (strain HI4320).